A 401-amino-acid polypeptide reads, in one-letter code: Phosphoglycerate kinase (401 aa).

Residues 23-25 (DLN), R38, 61-64 (HFGR), R120, and R153 contribute to the substrate site. ATP contacts are provided by residues K203, E325, and 355–358 (GGDT).

It belongs to the phosphoglycerate kinase family. As to quaternary structure, monomer.

Its subcellular location is the cytoplasm. The enzyme catalyses (2R)-3-phosphoglycerate + ATP = (2R)-3-phospho-glyceroyl phosphate + ADP. The protein operates within carbohydrate degradation; glycolysis; pyruvate from D-glyceraldehyde 3-phosphate: step 2/5. In Rhizobium johnstonii (strain DSM 114642 / LMG 32736 / 3841) (Rhizobium leguminosarum bv. viciae), this protein is Phosphoglycerate kinase.